A 347-amino-acid polypeptide reads, in one-letter code: Tetraacyldisaccharide 4'-kinase (347 aa).

Residue 54 to 61 coordinates ATP; the sequence is TVGGAGKT.

Belongs to the LpxK family.

The catalysed reaction is a lipid A disaccharide + ATP = a lipid IVA + ADP + H(+). It functions in the pathway glycolipid biosynthesis; lipid IV(A) biosynthesis; lipid IV(A) from (3R)-3-hydroxytetradecanoyl-[acyl-carrier-protein] and UDP-N-acetyl-alpha-D-glucosamine: step 6/6. Transfers the gamma-phosphate of ATP to the 4'-position of a tetraacyldisaccharide 1-phosphate intermediate (termed DS-1-P) to form tetraacyldisaccharide 1,4'-bis-phosphate (lipid IVA). The polypeptide is Tetraacyldisaccharide 4'-kinase (Rhizobium etli (strain CIAT 652)).